Reading from the N-terminus, the 801-residue chain is Phenylalanine--tRNA ligase beta subunit (801 aa).

In terms of domain architecture, tRNA-binding spans 39–147; the sequence is GGGLDQVVVA…SDLPLGVPLF (109 aa). Residues 401–477 enclose the B5 domain; the sequence is VSHRTIRFRV…RLNGYDRIET (77 aa). Mg(2+) contacts are provided by Asp455, Asp461, Glu464, and Glu465. In terms of domain architecture, FDX-ACB spans 708–801; the sequence is SRFPDTFRDI…LVAKLGATIR (94 aa).

It belongs to the phenylalanyl-tRNA synthetase beta subunit family. Type 1 subfamily. In terms of assembly, tetramer of two alpha and two beta subunits. Mg(2+) is required as a cofactor.

It localises to the cytoplasm. The catalysed reaction is tRNA(Phe) + L-phenylalanine + ATP = L-phenylalanyl-tRNA(Phe) + AMP + diphosphate + H(+). The polypeptide is Phenylalanine--tRNA ligase beta subunit (Geobacter sulfurreducens (strain ATCC 51573 / DSM 12127 / PCA)).